The following is a 163-amino-acid chain: MAKDSSFDIVSKVELPEVTNAINIALKEIQNRYDFKGSKSDIKLEKEVLVLTSDDEFKLDQVKDVLISKLVKRNVPIKNLDYGKVEAATGNTVRQRATLQQGIDKDNAKKINNIIKEMKLKVKTQVQDDQVRVTAKSRDDLQAVIAAVRSADLPIDVQFINYR.

Belongs to the YajQ family.

Functionally, nucleotide-binding protein. The chain is Nucleotide-binding protein BCG9842_B4128 from Bacillus cereus (strain G9842).